The primary structure comprises 211 residues: Probable nicotinate-nucleotide adenylyltransferase (211 aa).

It belongs to the NadD family.

The enzyme catalyses nicotinate beta-D-ribonucleotide + ATP + H(+) = deamido-NAD(+) + diphosphate. It functions in the pathway cofactor biosynthesis; NAD(+) biosynthesis; deamido-NAD(+) from nicotinate D-ribonucleotide: step 1/1. Its function is as follows. Catalyzes the reversible adenylation of nicotinate mononucleotide (NaMN) to nicotinic acid adenine dinucleotide (NaAD). The chain is Probable nicotinate-nucleotide adenylyltransferase from Desulfotalea psychrophila (strain LSv54 / DSM 12343).